We begin with the raw amino-acid sequence, 289 residues long: Iodotyrosine deiodinase 1 (289 aa).

The helical transmembrane segment at 1–21 (MYFLTPILVAILCILVVWIFK) threads the bilayer. The span at 47 to 58 (DLKDSSDLHQAE) shows a compositional bias: basic and acidic residues. The segment at 47–69 (DLKDSSDLHQAEEDADEWQESEE) is disordered. The segment covering 59 to 69 (EDADEWQESEE) has biased composition (acidic residues). FMN contacts are provided by residues 100–104 (RRSVR), Ser-128, and 128–129 (SG). 3,5-diiodo-L-tyrosine is bound by residues Ala-130, Glu-157, Tyr-161, and Lys-182. Residues Ala-130, Glu-157, Tyr-161, and Lys-182 each contribute to the 3-iodo-L-tyrosine site. Residues 237–239 (TTT) and Arg-279 each bind FMN.

This sequence belongs to the nitroreductase family. As to quaternary structure, homodimer. The cofactor is FMN.

It localises to the cell membrane. The protein resides in the cytoplasmic vesicle membrane. It catalyses the reaction 2 iodide + L-tyrosine + 2 NADP(+) = 3,5-diiodo-L-tyrosine + 2 NADPH + H(+). The enzyme catalyses iodide + L-tyrosine + NADP(+) = 3-iodo-L-tyrosine + NADPH. The catalysed reaction is 3-iodo-L-tyrosine + iodide + NADP(+) = 3,5-diiodo-L-tyrosine + NADPH + H(+). It carries out the reaction L-tyrosine + chloride + NADP(+) = 3-chloro-L-tyrosine + NADPH. It catalyses the reaction bromide + L-tyrosine + NADP(+) = 3-bromo-L-tyrosine + NADPH. In terms of biological role, catalyzes the dehalogenation of halotyrosines such as 3-bromo-L-tyrosine, 3-chloro-L-tyrosine, 3-iodo-L-tyrosine and 3,5-diiodo-L-tyrosine. During thyroid hormone biosynthesis, facilitates iodide salvage by catalysing the oxidative NADPH-dependent deiodination of the halogenated by-products of thyroid hormone production, monoiodotyrosine (L-MIT) and diiodotyrosine (L-DIT). The scavanged iodide can then reenter the hormone-producing pathways. Acts more efficiently on 3-iodo-L-tyrosine than 3,5-diiodo-L-tyrosine. The protein is Iodotyrosine deiodinase 1 (IYD) of Pongo abelii (Sumatran orangutan).